The sequence spans 429 residues: Ribonuclease E/G-like protein (429 aa).

2 residues coordinate Mg(2+): Asp-290 and Asp-332.

This sequence belongs to the RNase E/G family. The cofactor is Mg(2+).

Its subcellular location is the plastid. The protein resides in the chloroplast stroma. In terms of biological role, involved in intercistronic processing of primary transcripts from chloroplast operons. The endonucleolytic activity of the enzyme depends on the number of phosphates at the 5' end, is inhibited by structured RNA, and preferentially cleaves A/U-rich sequences. In Guillardia theta (Cryptophyte), this protein is Ribonuclease E/G-like protein (rne).